The following is a 280-amino-acid chain: UPF0758 protein Atu1607 (280 aa).

The disordered stretch occupies residues 1 to 22; that stretch reads MAKRPALPSADLSPTSGFEAGE. Residues 158-280 form the MPN domain; sequence VLGSWSSVID…HASFKGLRLI (123 aa). Residues H229, H231, and D242 each contribute to the Zn(2+) site. The JAMM motif signature appears at 229 to 242; that stretch reads HNHPSGDPTPSRAD.

This sequence belongs to the UPF0758 family.

The sequence is that of UPF0758 protein Atu1607 from Agrobacterium fabrum (strain C58 / ATCC 33970) (Agrobacterium tumefaciens (strain C58)).